The sequence spans 253 residues: MPQLIAGNWKMNGTLAGIAAYAAALRPASPGAELLVCPPAPLIAPLRAALDGAPVALGAQDCAVKRSGAHTGDLSADLLAELGATHVILGHSERRADHAESSATVREKARTAIAAGLVPIICVGETEAERDSGEAETVVRAQLAGSLPEELAGQTVPGVVAPGIIAYEPVWAIGTGRTPTEEDVAAMHASIRAALRRQLGAAGATMPILYGGSVKPSNAASLLALPEVGGALVGGASLKAEDFLAIASAAARD.

Residue 8–10 (NWK) coordinates substrate. Histidine 91 functions as the Electrophile in the catalytic mechanism. The active-site Proton acceptor is glutamate 168. Residues glycine 174, serine 213, and 234–235 (GG) each bind substrate.

It belongs to the triosephosphate isomerase family. In terms of assembly, homodimer.

It is found in the cytoplasm. It carries out the reaction D-glyceraldehyde 3-phosphate = dihydroxyacetone phosphate. It participates in carbohydrate biosynthesis; gluconeogenesis. Its pathway is carbohydrate degradation; glycolysis; D-glyceraldehyde 3-phosphate from glycerone phosphate: step 1/1. In terms of biological role, involved in the gluconeogenesis. Catalyzes stereospecifically the conversion of dihydroxyacetone phosphate (DHAP) to D-glyceraldehyde-3-phosphate (G3P). The sequence is that of Triosephosphate isomerase from Acidiphilium cryptum (strain JF-5).